Reading from the N-terminus, the 843-residue chain is MVKFTADELRAIMDCKHNIRNMSVIAHVDHGKSTLTDSLVAAAGIIAQEVAGDVRMTDTRADEAERGITIKSTGISLYYQMTDEALQSYKGERKGNDYLINLIDSPGHVDFSSEVTAALRITDGALVVVDCIEGVCVQTETVLRQALGERIRPVLTVNKMDRCFLELQVDGEEAYTTFQKVIENANVIMATYEDPLLGDVQVYPEKGTVAFSAGLHGWAFTLSNFAKMYASKFGVDESKMMERLWGENFFDPATKKWTTKNSGNASCKRGFVQFCYEPIKQIIAACMNDQKDKLLAHVTKLGIQMKTEEKDLMGRPLMKRVMQTWLPASSALLEMMIHHLPSPATAQRYRVENLYEGPMDDVYATAIRNCDPEGPLMLYVSKMIPASDKGRFFAFGRVFAGKVSTGMKVRIMGPNYVPGEKKDLYVKNVQRTVIWMGKKQETVEDVPCGNTVALVGLDQYITKNATLTNEKESDAHPIRAMKFSVSPVVRVAVQCKVASDLPKLVEGLKRLAKSDPMVVCSIEESGEHIIAGAGELHLEICLKDLQDDFMGGAEIIKSDPVVSFRETVLDRSVRTVMSKSPNKHNRLYMEARPMEEGLAEAIDEGRIGPRDDPKNRSKILAEEYGWDKDLAKKIWCFGPETTGPNMVVDMCKGVQYLNEIKDSVVAGFQWASKEGALAEENMRGICFEVCDVVLHTDAIHRGGGQIIPTARRVFYASQLTAKPRLLEPVYLVEIQAPENALGGIYSVLNQKRGHVFEEMQRPGTPLYNIKAYLPVVESFGFSSTLRASTSGQAFPQCVFDHWEMMPSDPLEAGSQASTLVSVIRKRKGLKEQMTPLSEFEDKL.

One can recognise a tr-type G domain in the interval 17-253; the sequence is HNIRNMSVIA…LWGENFFDPA (237 aa). A GTP-binding site is contributed by 26 to 33; the sequence is AHVDHGKS. Phosphothreonine is present on residues Thr-57 and Thr-59. 158-161 serves as a coordination point for GTP; it reads NKMD. His-700 bears the Diphthamide mark.

This sequence belongs to the TRAFAC class translation factor GTPase superfamily. Classic translation factor GTPase family. EF-G/EF-2 subfamily. In terms of processing, phosphorylation by EF-2 kinase completely inactivates EF-2.

The protein localises to the cytoplasm. The enzyme catalyses GTP + H2O = GDP + phosphate + H(+). Catalyzes the GTP-dependent ribosomal translocation step during translation elongation. During this step, the ribosome changes from the pre-translocational (PRE) to the post-translocational (POST) state as the newly formed A-site-bound peptidyl-tRNA and P-site-bound deacylated tRNA move to the P and E sites, respectively. Catalyzes the coordinated movement of the two tRNA molecules, the mRNA and conformational changes in the ribosome. This is Elongation factor 2 from Beta vulgaris (Sugar beet).